A 1001-amino-acid chain; its full sequence is ATP-dependent DNA/RNA helicase DHX36 (1001 aa).

The segment at 1-44 is required for recruitment to cytoplasmic stress granules; the sequence is MSYDYHQSWSRDGGPRGSGQGSSGGGGGGSRGSGGGGGGRGGRG. Residues 1 to 54 form a disordered region; sequence MSYDYHQSWSRDGGPRGSGQGSSGGGGGGSRGSGGGGGGRGGRGRHPAHLKGRE. Positions 1-97 are required for the pre-miR-134 transport; that stretch reads MSYDYHQSWS…IVQLLNSVQA (97 aa). A necessary for nuclear and nucleolar caps localizations region spans residues 1–193; the sequence is MSYDYHQSWS…KKTDPRYIEM (193 aa). Residues 15-41 are compositionally biased toward gly residues; the sequence is PRGSGQGSSGGGGGGSRGSGGGGGGRG. A DSM (DHX36-specific motif) region spans residues 46 to 68; that stretch reads HPAHLKGREIGLWYAKKQTQKNK. Residues 46-98 form a required for G4-DNA- and G4-RNA-binding region; that stretch reads HPAHLKGREIGLWYAKKQTQKNKEAERQERAVVHMDERREEQIVQLLNSVQAK. RecA-like domain stretches follow at residues 99-379 and 380-621; these read TDKD…MIHI and PGFT…DYQL. The stretch at 120 to 147 forms a coiled coil; it reads EVSSEKKINSEKKLDNQEKKLLNQEKKT. Serine 154 carries the post-translational modification Phosphoserine. Residues 210–380 enclose the Helicase ATP-binding domain; it reads VNLINNHQVT…FGNCPMIHIP (171 aa). Residue 226-231 participates in ATP binding; it reads GCGKTT. A necessary for interaction with single-stranded DNA at the 3'-end of the G4-DNA structure region spans residues 258 to 310; it reads RRISAISVAERVATERAESCGNGNSTGYQIRLQSRLPRKQGSILYCTTGIILQ. The DEAH box signature appears at 327-330; that stretch reads DEIH. Mg(2+) contacts are provided by glutamate 328 and histidine 330. The Helicase C-terminal domain occupies 470-640; the sequence is ALIRYIVLEE…ELCLQIKILR (171 aa). Residues 491 to 550 are necessary for interaction with single-stranded DNA at the 3'-end of the G4-DNA structure; sequence WDNISTLHDLLMSQVMFKSDKFLIIPLHSLMPTVNQTQVFKKTPPGVRKIVIATNIAETS. A Nuclear localization signal motif is present at residues 510–521; that stretch reads DKFLIIPLHSLM. Residues serine 550 and 595 to 598 each bind ATP; that span reads RAGR. Positions 622-691 are WH domain; that stretch reads PEILRTPLEE…LGVHLARLPV (70 aa). Necessary for interaction with single-stranded DNA at the 3'-end of the G4-DNA structure stretches follow at residues 631–690, 842–853, and 863–893; these read ELCL…ARLP, NLGKKRKMVKVH, and HPKS…IYLY. Positions 834-898 are OB-fold-like subdomains; it reads PKVAKIRLNL…SIYLYDCTEV (65 aa). Lysine 940 is subject to N6-acetyllysine. Phosphoserine is present on serine 956.

The protein belongs to the DEAD box helicase family. DEAH subfamily. Found in a multi-helicase-TICAM1 complex at least composed of DHX36, DDX1, DDX21 and TICAM1; this complex exists in resting cells with or without dsRNA poly(I:C) ligand stimulation. Interacts (via C-terminus) with TICAM1 (via TIR domain). Interacts (via C-terminus) with DDX21; this interaction serves as bridges to TICAM1. Interacts with TERT; this interaction is dependent on the ability of DHX36 to bind to the G-quadruplex RNA (G4-RNA) structure present in the telomerase RNA template component (TERC). Interacts with DKC1; this interaction is dependent on the ability of DHX36 to bind to the G4-RNA structure present in TERC. Interacts with PARN; this interaction stimulates PARN to enhance uPA mRNA decay. Interacts with EXOSC3; this interaction occurs in a RNase-insensitive manner. Interacts with EXOSC10; this interaction occurs in a RNase-insensitive manner. Interacts with ILF3; this interaction occurs in a RNA-dependent manner. Interacts with ELAVL1; this interaction occurs in an RNA-dependent manner. Interacts with DDX5; this interaction occurs in a RNA-dependent manner. Interacts with DDX17; this interaction occurs in a RNA-dependent manner. Interacts with HDAC1; this interaction occurs in a RNA-dependent manner. Interacts with HDAC3; this interaction occurs in a RNA-dependent manner. Interacts with HDAC4. Interacts with AGO1. Interacts with AGO2. Interacts with ERCC6. It depends on Mg(2+) as a cofactor. Expressed in spermatogonia stem cells and primary spermatocytes (at protein level). Expressed strongly in testis. Weakly expressed in heart, lung, liver, kidney, small intestine, spleen, lymphe node and thymus.

It localises to the nucleus. Its subcellular location is the cytoplasm. The protein localises to the cytosol. The protein resides in the stress granule. It is found in the nucleus speckle. It localises to the chromosome. Its subcellular location is the telomere. The protein localises to the mitochondrion. The protein resides in the perikaryon. It is found in the cell projection. It localises to the dendrite. Its subcellular location is the axon. It catalyses the reaction ATP + H2O = ADP + phosphate + H(+). With respect to regulation, ATPase activity is enhanced in the presence of homomeric poly(U) RNAs, but not by double-stranded DNA (dsDNA), double-stranded RNA (dsRNA) and tRNA. Multifunctional ATP-dependent helicase that unwinds G-quadruplex (G4) structures. Plays a role in many biological processes such as genomic integrity, gene expression regulations and as a sensor to initiate antiviral responses. G4 structures correspond to helical structures containing guanine tetrads. Binds with high affinity to and unwinds G4 structures that are formed in nucleic acids (G4-DNA and G4-RNA). Plays a role in genomic integrity. Converts the G4-RNA structure present in telomerase RNA template component (TREC) into a double-stranded RNA to promote P1 helix formation that acts as a template boundary ensuring accurate reverse transcription. Plays a role in transcriptional regulation. Resolves G4-DNA structures in promoters of genes, such as YY1, KIT/c-kit and ALPL and positively regulates their expression. Plays a role in post-transcriptional regulation. Unwinds a G4-RNA structure located in the 3'-UTR polyadenylation site of the pre-mRNA TP53 and stimulates TP53 pre-mRNA 3'-end processing in response to ultraviolet (UV)-induced DNA damage. Binds to the precursor-microRNA-134 (pre-miR-134) terminal loop and regulates its transport into the synapto-dendritic compartment. Involved in the pre-miR-134-dependent inhibition of target gene expression and the control of dendritic spine size. Plays a role in the regulation of cytoplasmic mRNA translation and mRNA stability. Binds to both G4-RNA structures and alternative non-quadruplex-forming sequence within the 3'-UTR of the PITX1 mRNA regulating negatively PITX1 protein expression. Binds to both G4-RNA structure in the 5'-UTR and AU-rich elements (AREs) localized in the 3'-UTR of NKX2-5 mRNA to either stimulate protein translation or induce mRNA decay in an ELAVL1-dependent manner, respectively. Also binds to ARE sequences present in several mRNAs mediating exosome-mediated 3'-5' mRNA degradation. Involved in cytoplasmic urokinase-type plasminogen activator (uPA) mRNA decay. Component of a multi-helicase-TICAM1 complex that acts as a cytoplasmic sensor of viral double-stranded RNA (dsRNA) and plays a role in the activation of a cascade of antiviral responses including the induction of pro-inflammatory cytokines via the adapter molecule TICAM1. Required for the early embryonic development and hematopoiesis. Involved in the regulation of cardioblast differentiation and proliferation during heart development. Involved in spermatogonia differentiation. May play a role in ossification. In Mus musculus (Mouse), this protein is ATP-dependent DNA/RNA helicase DHX36.